The chain runs to 406 residues: Phosphopentomutase (406 aa).

Residues Asp-10, Asp-305, His-310, Asp-346, His-347, and His-358 each coordinate Mn(2+).

Belongs to the phosphopentomutase family. The cofactor is Mn(2+).

The protein localises to the cytoplasm. It catalyses the reaction 2-deoxy-alpha-D-ribose 1-phosphate = 2-deoxy-D-ribose 5-phosphate. It carries out the reaction alpha-D-ribose 1-phosphate = D-ribose 5-phosphate. It functions in the pathway carbohydrate degradation; 2-deoxy-D-ribose 1-phosphate degradation; D-glyceraldehyde 3-phosphate and acetaldehyde from 2-deoxy-alpha-D-ribose 1-phosphate: step 1/2. Its function is as follows. Isomerase that catalyzes the conversion of deoxy-ribose 1-phosphate (dRib-1-P) and ribose 1-phosphate (Rib-1-P) to deoxy-ribose 5-phosphate (dRib-5-P) and ribose 5-phosphate (Rib-5-P), respectively. The sequence is that of Phosphopentomutase from Rhizobium meliloti (strain 1021) (Ensifer meliloti).